The chain runs to 641 residues: Threonine--tRNA ligase (641 aa).

A TGS domain is found at 1–61; sequence MPAITLPDGS…DDDVQLEIVT (61 aa). A catalytic region spans residues 242-533; it reads DHRRIGRAQN…LIEHYAGALP (292 aa). The Zn(2+) site is built by cysteine 333, histidine 384, and histidine 510.

The protein belongs to the class-II aminoacyl-tRNA synthetase family. In terms of assembly, homodimer. Zn(2+) serves as cofactor.

The protein localises to the cytoplasm. It catalyses the reaction tRNA(Thr) + L-threonine + ATP = L-threonyl-tRNA(Thr) + AMP + diphosphate + H(+). Its function is as follows. Catalyzes the attachment of threonine to tRNA(Thr) in a two-step reaction: L-threonine is first activated by ATP to form Thr-AMP and then transferred to the acceptor end of tRNA(Thr). Also edits incorrectly charged L-seryl-tRNA(Thr). In Alkalilimnicola ehrlichii (strain ATCC BAA-1101 / DSM 17681 / MLHE-1), this protein is Threonine--tRNA ligase.